The following is a 335-amino-acid chain: Leucine-rich repeat-containing protein 39 (335 aa).

A coiled-coil region spans residues 10–47 (AVNAVKEVWEKRIKKLNEDLKREKEFQHKLVRIWEERV). LRR repeat units lie at residues 84 to 105 (QLQE…IGRF), 107 to 128 (NLIV…IGLL), 130 to 151 (RLQE…LSNC), 153 to 176 (SLEK…SNLL), 177 to 197 (KLTH…AVLN), 200 to 221 (ALEW…IERM), 223 to 244 (NLHT…ISNM), 246 to 267 (NLGT…MEEM), and 269 to 290 (NLRF…PPSE).

Interacts with MYH7 (via C-terminus). As to expression, highly expressed in skeletal muscle and heart. Not detected in other tissues tested.

The protein localises to the cytoplasm. It is found in the myofibril. It localises to the sarcomere. Its subcellular location is the m line. Its function is as follows. Component of the sarcomeric M-band which plays a role in myocyte response to biomechanical stress. May regulate expression of other M-band proteins via an SRF-dependent pathway. Important for normal contractile function in heart. The sequence is that of Leucine-rich repeat-containing protein 39 (LRRC39) from Homo sapiens (Human).